Here is a 190-residue protein sequence, read N- to C-terminus: 7-methyl-GTP pyrophosphatase (190 aa).

D69 functions as the Proton acceptor in the catalytic mechanism.

It belongs to the Maf family. YceF subfamily. Requires a divalent metal cation as cofactor.

It localises to the cytoplasm. The enzyme catalyses N(7)-methyl-GTP + H2O = N(7)-methyl-GMP + diphosphate + H(+). Nucleoside triphosphate pyrophosphatase that hydrolyzes 7-methyl-GTP (m(7)GTP). May have a dual role in cell division arrest and in preventing the incorporation of modified nucleotides into cellular nucleic acids. This Xanthomonas axonopodis pv. citri (strain 306) protein is 7-methyl-GTP pyrophosphatase.